The following is a 441-amino-acid chain: L-seryl-tRNA(Sec) selenium transferase (441 aa).

An N6-(pyridoxal phosphate)lysine modification is found at lysine 283.

This sequence belongs to the SelA family. It depends on pyridoxal 5'-phosphate as a cofactor.

Its subcellular location is the cytoplasm. The enzyme catalyses L-seryl-tRNA(Sec) + selenophosphate + H(+) = L-selenocysteinyl-tRNA(Sec) + phosphate. It functions in the pathway aminoacyl-tRNA biosynthesis; selenocysteinyl-tRNA(Sec) biosynthesis; selenocysteinyl-tRNA(Sec) from L-seryl-tRNA(Sec) (bacterial route): step 1/1. Its function is as follows. Converts seryl-tRNA(Sec) to selenocysteinyl-tRNA(Sec) required for selenoprotein biosynthesis. The sequence is that of L-seryl-tRNA(Sec) selenium transferase from Campylobacter concisus (strain 13826).